A 224-amino-acid polypeptide reads, in one-letter code: MQNAEAAPALLAAHGLVGRRGGRRPLDLNLRPGQLVHVRGANGSGKTSLLRTLAGLLRPRRGEVRWNGADIHADLPGYYLHMAHLGHDNGCSDALTARENLRYALHVAGAPRAEPELERALRDWGLAAGADAPAARLSQGQGRRLALARVMLSRKRLWLLDEPDAGLDAASLQRLHGMLDAHLAGGGAAVLASHRGGGAWAGCTQTLELDEYAHAEVVGADCLA.

Positions 1 to 220 (MQNAEAAPAL…EYAHAEVVGA (220 aa)) constitute an ABC transporter domain. 40–47 (GANGSGKT) contributes to the ATP binding site.

Belongs to the ABC transporter superfamily. CcmA exporter (TC 3.A.1.107) family. The complex is composed of two ATP-binding proteins (CcmA) and two transmembrane proteins (CcmB).

Its subcellular location is the cell inner membrane. It carries out the reaction heme b(in) + ATP + H2O = heme b(out) + ADP + phosphate + H(+). Part of the ABC transporter complex CcmAB involved in the biogenesis of c-type cytochromes; once thought to export heme, this seems not to be the case, but its exact role is uncertain. Responsible for energy coupling to the transport system. The protein is Cytochrome c biogenesis ATP-binding export protein CcmA of Bordetella parapertussis (strain 12822 / ATCC BAA-587 / NCTC 13253).